A 497-amino-acid chain; its full sequence is Angiopoietin-1 (497 aa).

The signal sequence occupies residues 1–15 (MTVFLSFAFLAAILT). Asn-92, Asn-122, Asn-154, Asn-243, and Asn-294 each carry an N-linked (GlcNAc...) asparagine glycan. Residues 153 to 261 (LNQTSRLEIQ…LELMDTVHNL (109 aa)) adopt a coiled-coil conformation. The region spanning 276–496 (KEEEKPFRDC…STTMMIRPLD (221 aa)) is the Fibrinogen C-terminal domain. Disulfide bonds link Cys-285–Cys-314 and Cys-438–Cys-451.

As to quaternary structure, homooligomer. Interacts with TEK/TIE2. Interacts with SVEP1/polydom. Interacts with THBD; this interaction significantly inhibits the generation of activated PC and TAFIa/CPB2 by the thrombin/thrombomodulin complex.

The protein localises to the secreted. Functionally, binds and activates TIE2 receptor by inducing its tyrosine phosphorylation. Implicated in endothelial developmental processes later and distinct from that of VEGF. Appears to play a crucial role in mediating reciprocal interactions between the endothelium and surrounding matrix and mesenchyme. Mediates blood vessel maturation/stability. It may play an important role in the heart early development. In Bos taurus (Bovine), this protein is Angiopoietin-1 (ANGPT1).